The primary structure comprises 292 residues: 11-beta-hydroxysteroid dehydrogenase 1 (292 aa).

The Cytoplasmic segment spans residues 1–7; it reads MAFMKKY. Residues 8–24 traverse the membrane as a helical; Signal-anchor for type II membrane protein segment; it reads LLPILGIFLAYYYYSAN. Residues 25–292 are Lumenal-facing; sequence EEFRPEMLRG…KYNMERFINN (268 aa). Residues 41–67 and 92–93 each bind NADP(+); these read GASK…TARS and TM. Residue Asn-95 is glycosylated (N-linked (GlcNAc...) asparagine). 119–121 lines the NADP(+) pocket; it reads NHI. Ser-170 lines the substrate pocket. Tyr-183 acts as the Proton acceptor in catalysis. Residue 183 to 187 participates in NADP(+) binding; sequence YSASK. Residue Asn-207 is glycosylated (N-linked (GlcNAc...) asparagine). NADP(+)-binding positions include 216–222 and 218–222; these read GLIDTDT and IDTDT.

This sequence belongs to the short-chain dehydrogenases/reductases (SDR) family. Homodimer. In terms of tissue distribution, liver, kidney, lung, hypothalamus, anterior pituitary and placenta.

The protein resides in the endoplasmic reticulum membrane. It carries out the reaction an 11beta-hydroxysteroid + NADP(+) = an 11-oxosteroid + NADPH + H(+). The enzyme catalyses corticosterone + NADP(+) = 11-dehydrocorticosterone + NADPH + H(+). The catalysed reaction is cortisone + NADPH + H(+) = cortisol + NADP(+). It catalyses the reaction a 7beta-hydroxysteroid + NADP(+) = a 7-oxosteroid + NADPH + H(+). It carries out the reaction 7-oxocholesterol + NADPH + H(+) = 7beta-hydroxycholesterol + NADP(+). The enzyme catalyses chenodeoxycholate + NADP(+) = 7-oxolithocholate + NADPH + H(+). The catalysed reaction is 7-oxolithocholate + NADPH + H(+) = ursodeoxycholate + NADP(+). It catalyses the reaction glycochenodeoxycholate + NADP(+) = 7-oxoglycolithocholate + NADPH + H(+). It carries out the reaction taurochenodeoxycholate + NADP(+) = 7-oxotaurolithocholate + NADPH + H(+). The enzyme catalyses tauroursodeoxycholate + NADP(+) = 7-oxotaurolithocholate + NADPH + H(+). The catalysed reaction is glycoursodeoxycholate + NADP(+) = 7-oxoglycolithocholate + NADPH + H(+). It catalyses the reaction 7-oxopregnenolone + NADPH + H(+) = 7beta-hydroxypregnenolone + NADP(+). It carries out the reaction 3beta,7alpha-dihydroxyandrost-5-en-17-one + NADP(+) = 3beta-hydroxy-5-androstene-7,17-dione + NADPH + H(+). The enzyme catalyses 3beta-hydroxy-5-androstene-7,17-dione + NADPH + H(+) = 3beta,7beta-dihydroxyandrost-5-en-17-one + NADP(+). The catalysed reaction is 3beta-hydroxy-5alpha-androstane-7,17-dione + NADPH + H(+) = 3beta,7beta-dihydroxy-5alpha-androstan-17-one + NADP(+). Controls the reversible conversion of biologically active glucocorticoids such as cortisone to cortisol, and 11-dehydrocorticosterone to corticosterone in the presence of NADP(H). Participates in the corticosteroid receptor-mediated anti-inflammatory response, as well as metabolic and homeostatic processes. Plays a role in the secretion of aqueous humor in the eye, maintaining a normotensive, intraocular environment. Bidirectional in vitro, predominantly functions as a reductase in vivo, thereby increasing the concentration of active glucocorticoids. It has broad substrate specificity, besides glucocorticoids, it accepts other steroid and sterol substrates. Interconverts 7-oxo- and 7-hydroxy-neurosteroids such as 7-oxopregnenolone and 7beta-hydroxypregnenolone, 7-oxodehydroepiandrosterone (3beta-hydroxy-5-androstene-7,17-dione) and 7beta-hydroxydehydroepiandrosterone (3beta,7beta-dihydroxyandrost-5-en-17-one), among others. Catalyzes the stereo-specific conversion of the major dietary oxysterol, 7-ketocholesterol (7-oxocholesterol), into the more polar 7-beta-hydroxycholesterol metabolite. 7-oxocholesterol is one of the most important oxysterols, it participates in several events such as induction of apoptosis, accumulation in atherosclerotic lesions, lipid peroxidation, and induction of foam cell formation. Mediates the 7-oxo reduction of 7-oxolithocholate mainly to chenodeoxycholate, and to a lesser extent to ursodeoxycholate, both in its free form and when conjugated to glycine or taurine, providing a link between glucocorticoid activation and bile acid metabolism. Catalyzes the synthesis of 7-beta-25-dihydroxycholesterol from 7-oxo-25-hydroxycholesterol in vitro, which acts as a ligand for the G-protein-coupled receptor (GPCR) Epstein-Barr virus-induced gene 2 (EBI2) and may thereby regulate immune cell migration. The protein is 11-beta-hydroxysteroid dehydrogenase 1 (HSD11B1) of Ovis aries (Sheep).